A 342-amino-acid polypeptide reads, in one-letter code: Alpha-tocopherol transfer protein-like (342 aa).

The segment at 1 to 31 (MSEESDSLRTSPSVASLSENELPPPPEPPGY) is disordered. The span at 8 to 19 (LRTSPSVASLSE) shows a compositional bias: polar residues. Positions 117–282 (KPSALKDVLA…EYGGTAGELD (166 aa)) constitute a CRAL-TRIO domain.

Its function is as follows. May act as a protein that binds a hydrophobic ligand. The protein is Alpha-tocopherol transfer protein-like (TTPAL) of Pongo abelii (Sumatran orangutan).